The following is a 197-amino-acid chain: ATP-dependent Clp protease proteolytic subunit 1 (197 aa).

Residue His126 is part of the active site.

This sequence belongs to the peptidase S14 family. As to quaternary structure, fourteen ClpP subunits assemble into 2 heptameric rings which stack back to back to give a disk-like structure with a central cavity, resembling the structure of eukaryotic proteasomes.

The protein resides in the cytoplasm. It catalyses the reaction Hydrolysis of proteins to small peptides in the presence of ATP and magnesium. alpha-casein is the usual test substrate. In the absence of ATP, only oligopeptides shorter than five residues are hydrolyzed (such as succinyl-Leu-Tyr-|-NHMec, and Leu-Tyr-Leu-|-Tyr-Trp, in which cleavage of the -Tyr-|-Leu- and -Tyr-|-Trp bonds also occurs).. In terms of biological role, cleaves peptides in various proteins in a process that requires ATP hydrolysis. Has a chymotrypsin-like activity. Plays a major role in the degradation of misfolded proteins. The sequence is that of ATP-dependent Clp protease proteolytic subunit 1 from Nocardia farcinica (strain IFM 10152).